The chain runs to 118 residues: MTNYLVAMEAAWLVRDVNDIDDAIGVAVSEAGKRLNDRDKEYVEVEVGATPCPACGEPFDSAFIAADTALVGLLLEITVFNADGEKHASRIAKSEVGGALRDVPLSVIDCVETEDDDT.

It belongs to the UPF0212 family.

The chain is UPF0212 protein HQ_2663A from Haloquadratum walsbyi (strain DSM 16790 / HBSQ001).